The following is a 520-amino-acid chain: Cytochrome P450 monooxygenase 98 (520 aa).

A helical transmembrane segment spans residues 7–27 (MLNNNLLIVIGTFAVCVYIVL). Residue Cys-445 participates in heme binding.

It belongs to the cytochrome P450 family. It depends on heme as a cofactor.

It localises to the membrane. It functions in the pathway secondary metabolite biosynthesis. Cytochrome P450 monooxygenase that is able to use pyrene, phenanthrene, 3,5-dimethoxy-trans-stilbene and 3,5,4'-trimethoxy-trans-stilbene as substrates for oxidation. This chain is Cytochrome P450 monooxygenase 98, found in Postia placenta (strain ATCC 44394 / Madison 698-R) (Brown rot fungus).